The following is a 278-amino-acid chain: Shikimate dehydrogenase (NADP(+)) (278 aa).

Residues 18-20 (SRS) and Thr-65 each bind shikimate. Lys-69 serves as the catalytic Proton acceptor. Position 80 (Glu-80) interacts with NADP(+). Residues Asn-89 and Asp-104 each coordinate shikimate. Residues 129-133 (GAGGS) and Leu-218 contribute to the NADP(+) site. Shikimate is bound at residue Tyr-220. Gly-241 contacts NADP(+).

The protein belongs to the shikimate dehydrogenase family. As to quaternary structure, homodimer.

It catalyses the reaction shikimate + NADP(+) = 3-dehydroshikimate + NADPH + H(+). Its pathway is metabolic intermediate biosynthesis; chorismate biosynthesis; chorismate from D-erythrose 4-phosphate and phosphoenolpyruvate: step 4/7. Involved in the biosynthesis of the chorismate, which leads to the biosynthesis of aromatic amino acids. Catalyzes the reversible NADPH linked reduction of 3-dehydroshikimate (DHSA) to yield shikimate (SA). In Rhodopseudomonas palustris (strain ATCC BAA-98 / CGA009), this protein is Shikimate dehydrogenase (NADP(+)).